Consider the following 259-residue polypeptide: Interleukin-1 receptor-associated kinase 1-binding protein 1 (259 aa).

A phosphoserine mark is found at Ser55, Ser61, Ser63, and Ser234. Thr236 carries the phosphothreonine modification. The segment at 239–259 is required for nuclear localization (NLS); that stretch reads AASKVFITFEVKGKEKKKKHL. A Phosphoserine modification is found at Ser241. A Phosphothreonine modification is found at Thr246.

This sequence belongs to the IRAK1BP1 family. In terms of assembly, interacts with IRAK1 and RELA. Interacts with HSPA8 and HSPA1. May interact with Listeria monocytogenes actA. Phosphorylation at Ser-55, Ser-61 and/or Ser-63 is required for full activity. Phosphorylated on at least one of Ser-234, Thr-236, Ser-241 and Thr-246 upon TNF-alpha activation, which favors nuclear translocation. As to expression, expressed in testis, brain, kidney, liver and heart.

It localises to the cytoplasm. Its subcellular location is the nucleus. Component of the IRAK1-dependent TNFRSF1A signaling pathway that leads to NF-kappa-B activation and is required for cell survival. Acts by enhancing RELA transcriptional activity. The polypeptide is Interleukin-1 receptor-associated kinase 1-binding protein 1 (Irak1bp1) (Mus musculus (Mouse)).